The chain runs to 756 residues: Lysyl oxidase homolog 4 (756 aa).

The N-terminal stretch at 1 to 24 is a signal peptide; sequence MAWSPPATLFLFLLLLGQPPPSRP. SRCR domains lie at 32–133, 159–287, 311–411, and 421–529; these read LRLV…VICH, VRLK…VSCV, VRLR…VRCN, and VRLA…VSCM. 17 disulfide bridges follow: C58-C122, C71-C132, C102-C112, C191-C276, C204-C286, C251-C261, C336-C400, C349-C410, C380-C390, C450-C515, C463-C528, C497-C507, C558-C564, C610-C658, C642-C648, C670-C680, and C717-C731. The N-linked (GlcNAc...) asparagine glycan is linked to N198. A lysyl-oxidase like region spans residues 533 to 736; it reads PDLVMNAQLV…WLHNCHTGNS (204 aa). H611, H613, and H615 together coordinate Cu cation. The N-linked (GlcNAc...) asparagine glycan is linked to N629. A cross-link (lysine tyrosylquinone (Lys-Tyr)) is located at residues 638–674; that stretch reads KASFCLEDTNCPTGLQRRYACANFGEQGVTVGCWDTY. Y674 carries the post-translational modification 2',4',5'-topaquinone.

The protein belongs to the lysyl oxidase family. Cu cation serves as cofactor. Lysine tyrosylquinone residue is required as a cofactor. Post-translationally, the lysine tyrosylquinone cross-link (LTQ) is generated by condensation of the epsilon-amino group of a lysine with a topaquinone produced by oxidation of tyrosine. In terms of processing, may be proteolytically cleaved by BMP1. Expressed in many tissues, the highest levels among the tissues studied being in the skeletal muscle, testis and pancreas. Expressed in cartilage.

It is found in the secreted. Its subcellular location is the extracellular space. It catalyses the reaction L-lysyl-[protein] + O2 + H2O = (S)-2-amino-6-oxohexanoyl-[protein] + H2O2 + NH4(+). Its activity is regulated as follows. Inhibited by beta-aminopropionitrile (BAPN). In terms of biological role, catalyzes the oxidative deamination of lysine and hydroxylysine residues in collagen and elastin, resulting in the formation of covalent cross-linkages, and the stabilization of collagen and elastin fibers. This chain is Lysyl oxidase homolog 4 (LOXL4), found in Homo sapiens (Human).